The primary structure comprises 312 residues: 1-phosphofructokinase (312 aa).

ATP is bound by residues 223 to 228 and 254 to 255; these read SLGAEG and GD. Catalysis depends on Asp-255, which acts as the Proton acceptor.

The protein belongs to the carbohydrate kinase PfkB family.

The enzyme catalyses beta-D-fructose 1-phosphate + ATP = beta-D-fructose 1,6-bisphosphate + ADP + H(+). Its function is as follows. Catalyzes the ATP-dependent phosphorylation of fructose-l-phosphate to fructose-l,6-bisphosphate. In Escherichia coli O157:H7, this protein is 1-phosphofructokinase (fruK).